The sequence spans 300 residues: NAD kinase (300 aa).

The active-site Proton acceptor is the Asp75. Residues 75-76 (DG), 149-150 (ND), Arg177, Asp179, 190-195 (TAYALS), Ala214, and Gln248 contribute to the NAD(+) site.

The protein belongs to the NAD kinase family. Requires a divalent metal cation as cofactor.

Its subcellular location is the cytoplasm. It catalyses the reaction NAD(+) + ATP = ADP + NADP(+) + H(+). In terms of biological role, involved in the regulation of the intracellular balance of NAD and NADP, and is a key enzyme in the biosynthesis of NADP. Catalyzes specifically the phosphorylation on 2'-hydroxyl of the adenosine moiety of NAD to yield NADP. This is NAD kinase from Burkholderia pseudomallei (strain K96243).